The chain runs to 226 residues: Ras-related protein RGP1 (226 aa).

25–32 is a GTP binding site; sequence GDSAVGKS. The Effector region signature appears at 47 to 55; sequence SKATIGVEF. Residues 73–77 and 131–134 each bind GTP; these read DTAGQ and NKSD. S-geranylgeranyl cysteine attachment occurs at residues Cys-223 and Cys-224.

The protein belongs to the small GTPase superfamily. Rab family.

The protein localises to the cell membrane. May play an important role in plant growth and development. This is Ras-related protein RGP1 (RGP1) from Oryza sativa subsp. japonica (Rice).